Reading from the N-terminus, the 232-residue chain is 5'-methylthioadenosine/S-adenosylhomocysteine nucleosidase (232 aa).

The Proton acceptor role is filled by Glu-12. Substrate contacts are provided by residues Gly-78, Ile-152, and 173-174 (ME). Asp-197 serves as the catalytic Proton donor.

This sequence belongs to the PNP/UDP phosphorylase family. MtnN subfamily. Homodimer.

The enzyme catalyses S-adenosyl-L-homocysteine + H2O = S-(5-deoxy-D-ribos-5-yl)-L-homocysteine + adenine. The catalysed reaction is S-methyl-5'-thioadenosine + H2O = 5-(methylsulfanyl)-D-ribose + adenine. It carries out the reaction 5'-deoxyadenosine + H2O = 5-deoxy-D-ribose + adenine. It participates in amino-acid biosynthesis; L-methionine biosynthesis via salvage pathway; S-methyl-5-thio-alpha-D-ribose 1-phosphate from S-methyl-5'-thioadenosine (hydrolase route): step 1/2. Catalyzes the irreversible cleavage of the glycosidic bond in both 5'-methylthioadenosine (MTA) and S-adenosylhomocysteine (SAH/AdoHcy) to adenine and the corresponding thioribose, 5'-methylthioribose and S-ribosylhomocysteine, respectively. Also cleaves 5'-deoxyadenosine, a toxic by-product of radical S-adenosylmethionine (SAM) enzymes, into 5-deoxyribose and adenine. Thus, is required for in vivo function of the radical SAM enzymes biotin synthase and lipoic acid synthase, that are inhibited by 5'-deoxyadenosine accumulation. In Salmonella enteritidis PT4 (strain P125109), this protein is 5'-methylthioadenosine/S-adenosylhomocysteine nucleosidase.